A 49-amino-acid chain; its full sequence is Large ribosomal subunit protein bL33A (49 aa).

This sequence belongs to the bacterial ribosomal protein bL33 family.

This is Large ribosomal subunit protein bL33A from Staphylococcus aureus (strain Mu3 / ATCC 700698).